The chain runs to 274 residues: Light-independent protochlorophyllide reductase iron-sulfur ATP-binding protein (274 aa).

ATP-binding positions include 12 to 17 and K41; that span reads GIGKST. S16 serves as a coordination point for Mg(2+). Residues C97 and C131 each coordinate [4Fe-4S] cluster.

Belongs to the NifH/BchL/ChlL family. In terms of assembly, homodimer. Protochlorophyllide reductase is composed of three subunits; BchL, BchN and BchB. Requires [4Fe-4S] cluster as cofactor.

The enzyme catalyses chlorophyllide a + oxidized 2[4Fe-4S]-[ferredoxin] + 2 ADP + 2 phosphate = protochlorophyllide a + reduced 2[4Fe-4S]-[ferredoxin] + 2 ATP + 2 H2O. Its pathway is porphyrin-containing compound metabolism; bacteriochlorophyll biosynthesis (light-independent). In terms of biological role, component of the dark-operative protochlorophyllide reductase (DPOR) that uses Mg-ATP and reduced ferredoxin to reduce ring D of protochlorophyllide (Pchlide) to form chlorophyllide a (Chlide). This reaction is light-independent. The L component serves as a unique electron donor to the NB-component of the complex, and binds Mg-ATP. The polypeptide is Light-independent protochlorophyllide reductase iron-sulfur ATP-binding protein (Chloroherpeton thalassium (strain ATCC 35110 / GB-78)).